A 436-amino-acid polypeptide reads, in one-letter code: Methylenetetrahydrofolate--tRNA-(uracil-5-)-methyltransferase TrmFO (436 aa).

9 to 14 (GAGLAG) contributes to the FAD binding site.

This sequence belongs to the MnmG family. TrmFO subfamily. It depends on FAD as a cofactor.

The protein resides in the cytoplasm. The enzyme catalyses uridine(54) in tRNA + (6R)-5,10-methylene-5,6,7,8-tetrahydrofolate + NADH + H(+) = 5-methyluridine(54) in tRNA + (6S)-5,6,7,8-tetrahydrofolate + NAD(+). The catalysed reaction is uridine(54) in tRNA + (6R)-5,10-methylene-5,6,7,8-tetrahydrofolate + NADPH + H(+) = 5-methyluridine(54) in tRNA + (6S)-5,6,7,8-tetrahydrofolate + NADP(+). In terms of biological role, catalyzes the folate-dependent formation of 5-methyl-uridine at position 54 (M-5-U54) in all tRNAs. This is Methylenetetrahydrofolate--tRNA-(uracil-5-)-methyltransferase TrmFO from Ligilactobacillus salivarius (strain UCC118) (Lactobacillus salivarius).